A 163-amino-acid chain; its full sequence is Aspartate carbamoyltransferase regulatory chain (163 aa).

Zn(2+) is bound by residues C113, C118, C143, and C146.

It belongs to the PyrI family. Contains catalytic and regulatory chains. It depends on Zn(2+) as a cofactor.

Functionally, involved in allosteric regulation of aspartate carbamoyltransferase. The sequence is that of Aspartate carbamoyltransferase regulatory chain from Caldivirga maquilingensis (strain ATCC 700844 / DSM 13496 / JCM 10307 / IC-167).